Reading from the N-terminus, the 553-residue chain is MSDSTGRINSKASDSSSISDHQTADLSIFNGSFDGGAFSSSNIPLFNFMGTGNQRFQYSPHPFAKSSDPCRLAALTPSTPKGPLNLTPADFGLADFSVGNESFADFTANNTSFVGNVQSNVRSTRLLPAWAVDNSGNIRDDLTLQDVVSNGSLIDFAMDRTGVKFLERHFPEDHDNEMHFVLFDKLTEQGAVFTSLCRSAAGNFIIQKFVEHATLDEQERLVRKMCDNGLIEMCLDKFACRVVQMSIQKFDVSIAMKLVEKISSLDFLPLCTDQCAIHVLQKVVKLLPISAWSFFVKFLCRDDNLMTVCQDKYGCRLVQQTIDKLSDNPKLHCFNTRLQLLHGLMTSVARNCFRLSSNEFANYVVQYVIKSSGVMEMYRDTIIEKCLLRNILSMSQDKYASHVVEGAFLFAPPLLLSEMMDEIFDGYVKDQETNRDALDILLFHQYGNYVVQQMISICISALLGKEERKMVASEMRLYAKWFDRIKNRVNRHSGRLERFSSGKKIIESLQKLNVPMTMTNEPMPYWAMPTPLMDISAHFMNKLNFQKNSVFDE.

8 Pumilio repeats span residues 146-184 (DVVSNGSLIDFAMDRTGVKFLERHFPEDHDNEMHFVLFD), 185-223 (KLTEQGAVFTSLCRSAAGNFIIQKFVEHATLDEQERLVR), 224-260 (KMCDNGLIEMCLDKFACRVVQMSIQKFDVSIAMKLVE), 261-296 (KISSLDFLPLCTDQCAIHVLQKVVKLLPISAWSFFV), 297-335 (KFLCRDDNLMTVCQDKYGCRLVQQTIDKLSDNPKLHCFN), 347-384 (SVARNCFRLSSNEFANYVVQYVIKSSGVMEMYRDTIIE), 386-421 (CLLRNILSMSQDKYASHVVEGAFLFAPPLLLSEMMD), and 432-472 (ETNR…KMVA). Residues 499–514 (FSSGKKIIESLQKLNV) form an RNA-binding region.

In terms of tissue distribution, detected in differentiating oocytes with highest levels observed in developing ooctyes in the distal portion of the proximal gonad.

The protein resides in the cytoplasm. It localises to the P-body. Functionally, RNA-binding protein that binds to the consensus sequence 5'-CUCUGUAUCUUGU-3' in mRNA 3'-UTRs and modulates mRNA expression and stability. Functions redundantly with puf-6 and puf-7 in oocyte formation and organization, early embryonic cell divisions, and repression of expression of glp-1 and other maternal mRNAs in late oogenesis. In Caenorhabditis elegans, this protein is Pumilio domain-containing protein 5.